A 535-amino-acid polypeptide reads, in one-letter code: Dimethylaniline monooxygenase [N-oxide-forming] 2 (535 aa).

N-acetylalanine is present on Ala-2. FAD contacts are provided by residues 9–13, Glu-32, 40–41, and 61–62; these read GAGVS, LW, and NT. Residues 60 to 61 and 195 to 198 contribute to the NADP(+) site; these read TN and SAAD. Lys-492 participates in a covalent cross-link: Glycyl lysine isopeptide (Lys-Gly) (interchain with G-Cter in SUMO). Residues 510–530 form a helical membrane-spanning segment; sequence APVSFLLKILGLLAVVLAFFF.

It belongs to the FMO family. FAD serves as cofactor. The cofactor is Mg(2+).

It is found in the microsome membrane. The protein localises to the endoplasmic reticulum membrane. Its function is as follows. Catalyzes the oxidative metabolism of numerous xenobiotics, including mainly therapeutic drugs and insecticides that contain a soft nucleophile, most commonly nitrogen and sulfur and participates to their bioactivation. Catalyzes the S-oxygenation of the prodrug ethionamide (ETA) to the S-oxide (ETASO), the first step in its bioactivation following by the second oxygenation to the sulfinic acid but to a lesser extend. This is Dimethylaniline monooxygenase [N-oxide-forming] 2 from Mus musculus (Mouse).